A 146-amino-acid polypeptide reads, in one-letter code: Ribosome-binding factor A (146 aa).

The segment covering 122-134 (QQQFGSAEDVTSN) has biased composition (polar residues). Residues 122–146 (QQQFGSAEDVTSNDIDEADDTEGKA) form a disordered region. Positions 135-146 (DIDEADDTEGKA) are enriched in acidic residues.

Belongs to the RbfA family. In terms of assembly, monomer. Binds 30S ribosomal subunits, but not 50S ribosomal subunits or 70S ribosomes.

It is found in the cytoplasm. In terms of biological role, one of several proteins that assist in the late maturation steps of the functional core of the 30S ribosomal subunit. Associates with free 30S ribosomal subunits (but not with 30S subunits that are part of 70S ribosomes or polysomes). Required for efficient processing of 16S rRNA. May interact with the 5'-terminal helix region of 16S rRNA. The sequence is that of Ribosome-binding factor A from Shewanella sp. (strain ANA-3).